The sequence spans 1218 residues: Thrombospondin type 1 domain-containing protein (1218 aa).

Disordered regions lie at residues 82–101, 189–240, 298–383, and 445–471; these read SAGF…PCSS, SLEE…SRTR, HTAN…VNGL, and GGKS…SHRG. Basic and acidic residues predominate over residues 201–210; the sequence is GYEEERERRS. The span at 315 to 375 shows a compositional bias: low complexity; that stretch reads SSRFTSKASS…SSPLSSSPDS (61 aa). The 67-residue stretch at 638–704 folds into the TSP type-1 domain; sequence SCITGPWSEW…RRKCNLGACP (67 aa). Residues 886–906 traverse the membrane as a helical segment; sequence GVSHLWISLCAGAVAAVVFLV. The interval 1129-1153 is disordered; the sequence is RRRARRGRREGDSGEGGDCGEARKA.

Component of a complex, at least composed of cysteine repeat modular protein A (CRMPa), cysteine repeat modular protein B (CRMPb), micronemal protein 15 (MIC15) and thrombospondin type 1 domain-containing protein (TSP1).

The protein localises to the membrane. In terms of biological role, required for rhoptry secretion. Plays a role in host cell invasion. The chain is Thrombospondin type 1 domain-containing protein from Toxoplasma gondii.